Reading from the N-terminus, the 467-residue chain is Calcium-binding protein P (467 aa).

Composition is skewed to pro residues over residues 1–10 and 45–62; these read MQNPQNPPPA and QYPP…PPYP. Residues 1–311 form a disordered region; sequence MQNPQNPPPA…GAYPGQPPMG (311 aa). The XYPPX motif lies at 45–49; sequence QYPPQ. Low complexity predominate over residues 63-74; that stretch reads GTQQPGAPGAPG. 17 short sequence motifs (XYPPX) span residues 75–79, 83–87, 94–98, 104–108, 115–119, 125–129, 136–140, 146–150, 157–161, 165–169, 176–180, 187–191, 221–225, 238–242, 247–251, 256–260, and 275–279; these read QYPPQ, GYPPQ, AYPPQ, and GVPPQ. Pro residues-rich tracts occupy residues 75-109 and 118-131; these read QYPP…PPQQ and PQQP…PQQP. Residues 132 to 145 are compositionally biased toward low complexity; sequence GAPGQYPPQQGQPG. 2 stretches are compositionally biased toward low complexity: residues 153–193 and 215–246; these read GQPG…PQQG and AYPG…GQPG. Residues 253 to 311 show a composition bias toward low complexity; it reads QPGAYPPQQQQVAYPGQQPPMGAYPPQQGAYPGQQGAYPGQQGAYPGQQGAYPGQPPMG. 2 consecutive EF-hand domains span residues 399–434 and 435–467; these read QKMM…LGYY and FSKG…WSMQ. Positions 412, 414, 416, 418, and 423 each coordinate Ca(2+).

In Dictyostelium discoideum (Social amoeba), this protein is Calcium-binding protein P (cbpP).